The primary structure comprises 366 residues: tRNA/tmRNA (uracil-C(5))-methyltransferase (366 aa).

Residues glutamine 190, tyrosine 218, asparagine 223, glutamate 239, and aspartate 299 each coordinate S-adenosyl-L-methionine. Cysteine 324 serves as the catalytic Nucleophile. Glutamate 358 functions as the Proton acceptor in the catalytic mechanism.

The protein belongs to the class I-like SAM-binding methyltransferase superfamily. RNA M5U methyltransferase family. TrmA subfamily.

It catalyses the reaction uridine(54) in tRNA + S-adenosyl-L-methionine = 5-methyluridine(54) in tRNA + S-adenosyl-L-homocysteine + H(+). The enzyme catalyses uridine(341) in tmRNA + S-adenosyl-L-methionine = 5-methyluridine(341) in tmRNA + S-adenosyl-L-homocysteine + H(+). Its function is as follows. Dual-specificity methyltransferase that catalyzes the formation of 5-methyluridine at position 54 (m5U54) in all tRNAs, and that of position 341 (m5U341) in tmRNA (transfer-mRNA). The chain is tRNA/tmRNA (uracil-C(5))-methyltransferase from Salmonella paratyphi C (strain RKS4594).